A 164-amino-acid chain; its full sequence is SsrA-binding protein (164 aa).

Residues 143–164 (HDKRQDEKQKSIKKEINSVLKR) are disordered. Residues 145–158 (KRQDEKQKSIKKEI) are compositionally biased toward basic and acidic residues.

Belongs to the SmpB family.

The protein localises to the cytoplasm. Its function is as follows. Required for rescue of stalled ribosomes mediated by trans-translation. Binds to transfer-messenger RNA (tmRNA), required for stable association of tmRNA with ribosomes. tmRNA and SmpB together mimic tRNA shape, replacing the anticodon stem-loop with SmpB. tmRNA is encoded by the ssrA gene; the 2 termini fold to resemble tRNA(Ala) and it encodes a 'tag peptide', a short internal open reading frame. During trans-translation Ala-aminoacylated tmRNA acts like a tRNA, entering the A-site of stalled ribosomes, displacing the stalled mRNA. The ribosome then switches to translate the ORF on the tmRNA; the nascent peptide is terminated with the 'tag peptide' encoded by the tmRNA and targeted for degradation. The ribosome is freed to recommence translation, which seems to be the essential function of trans-translation. This is SsrA-binding protein from Prochlorococcus marinus (strain MIT 9312).